A 736-amino-acid chain; its full sequence is Polyphosphate kinase (736 aa).

N91 lines the ATP pocket. The Mg(2+) site is built by R421 and R451. The Phosphohistidine intermediate role is filled by H481. Positions 514, 610, and 638 each coordinate ATP.

Belongs to the polyphosphate kinase 1 (PPK1) family. Mg(2+) is required as a cofactor. An intermediate of this reaction is the autophosphorylated ppk in which a phosphate is covalently linked to a histidine residue through a N-P bond.

The catalysed reaction is [phosphate](n) + ATP = [phosphate](n+1) + ADP. Catalyzes the reversible transfer of the terminal phosphate of ATP to form a long-chain polyphosphate (polyP). The protein is Polyphosphate kinase of Pseudomonas syringae pv. tomato (strain ATCC BAA-871 / DC3000).